A 603-amino-acid polypeptide reads, in one-letter code: Keratin, type II cuticular Hb4 (603 aa).

The tract at residues 1 to 173 (MSCRSYRVSS…PNAQRVKRDE (173 aa)) is head. In terms of domain architecture, IF rod spans 173–484 (EKEQIKTLNN…RLLEGEEIRI (312 aa)). The tract at residues 174–208 (KEQIKTLNNKFASFIDKVRFLEQQNKLLETKWSFL) is coil 1A. Residues 209–218 (QEQKCARSNL) are linker 1. The segment at 219–319 (EPLFDNYITN…YHEEIEMLQS (101 aa)) is coil 1B. A linker 12 region spans residues 320–336 (HISETSVIVKMDNSRDL). The tract at residues 337–480 (NLDGIIAEVK…VTYRRLLEGE (144 aa)) is coil 2. The tail stretch occupies residues 481 to 603 (EIRICEGVGP…STTTSRRTRY (123 aa)). The disordered stretch occupies residues 579 to 603 (CSGGRGNRSSSVRFSSTTTSRRTRY).

This sequence belongs to the intermediate filament family. Heterotetramer of two type I and two type II keratins. As to expression, in skin, only expressed in the suprabasal cells of tail scale epidermis. Suprabasally expressed in stratified squamous epithelia and also in the posterior unit of the complex filiform papillae of tongue. Expressed in rare anatomical sites in which an orthokeratinized stratum corneum would be too soft and a hard keratinized structure would be too rigid to meet the functional requirement of the respective epithelia.

This Mus musculus (Mouse) protein is Keratin, type II cuticular Hb4 (Krt84).